Reading from the N-terminus, the 254-residue chain is Ribosomal RNA small subunit methyltransferase J (254 aa).

S-adenosyl-L-methionine is bound by residues 107 to 108, 123 to 124, and Asp-174; these read RD and ER.

Belongs to the methyltransferase superfamily. RsmJ family.

The protein resides in the cytoplasm. It carries out the reaction guanosine(1516) in 16S rRNA + S-adenosyl-L-methionine = N(2)-methylguanosine(1516) in 16S rRNA + S-adenosyl-L-homocysteine + H(+). Its function is as follows. Specifically methylates the guanosine in position 1516 of 16S rRNA. This Coxiella burnetii (strain Dugway 5J108-111) protein is Ribosomal RNA small subunit methyltransferase J.